The primary structure comprises 305 residues: GS homeobox 2 (305 aa).

Disordered stretches follow at residues 115-151 (DAQFCPRVSHAHHHHHPPQHHHHHHQPQQPGSAAAAA) and 259-305 (KKEG…ISPL). The span at 123–140 (SHAHHHHHPPQHHHHHHQ) shows a compositional bias: basic residues. Residues 141–151 (PQQPGSAAAAA) are compositionally biased toward low complexity. The segment at residues 203-262 (GKRMRTAFTSTQLLELEREFSSNMYLSRLRRIEIATYLNLSEKQVKIWFQNRRVKHKKEG) is a DNA-binding region (homeobox).

This sequence belongs to the Antp homeobox family.

It localises to the nucleus. Functionally, transcription factor that binds 5'-CNAATTAG-3' DNA sequence and regulates the expression of numerous genes including genes important for brain development. During telencephalic development, causes ventralization of pallial progenitors and, depending on the developmental stage, specifies different neuronal fates. At early stages, necessary and sufficient to correctly specify the ventral lateral ganglionic eminence (LGE) and its major derivatives, the striatal projection neurons. At later stages, may specify LGE progenitors toward dorsal LGE fates, including olfactory bulb interneurons. The chain is GS homeobox 2 (Gsx2) from Mus musculus (Mouse).